The following is a 571-amino-acid chain: MDEDLRERIEREAETAALFNALKHESDAQVGAILGPMMGENPDFRPHGDEIPGIISPVIERVNGLSDEEKRERLEELAPEKVEALAAEDEGDDRPLPELPNADAYDDVRMRLAPNPNGPWHVGHARMPAVIGTYKDRYDGWFCVRFDDTDPETKRPDLDAYGEILDAIDYLGFEPDEVVKASDRVETYYEYGRKLIKAGGAYTCSCDAESFSELKNNAEACPHRDKDIETTLSEFEAMIDGEYSAGEMVLRVRTDIEHKNPALRDWVAFRMVDTPHPREEAADYRCWPMLDFQSGIDDHEFGISHIIRGIDLQDSAKRQQFVYEYFDWEYPEVIHWGHVQIDAYDIEMSTSTIKQLIDDGELDDWDDPRAPTVASLKRRGIRGQAIVNAMVELGTSTSNVDLAMSSVYAENREFVDDEADRRFFVRDGVEKPLAGGPESASPPLHPNDEDRGRREIPVGDAVYVEPDDVPADGERVWLKGLGPVRHEDGAFVATDDDIEVVRDGAVDVVHWVPAQESVPLRLRTVDGDEAGHAEPGIETYDADDIVQFERIGFARIDRHDDEESVAYFAHP.

Residues 114–124 (PNPNGPWHVGH) carry the 'HIGH' region motif. A disordered region spans residues 431–453 (KPLAGGPESASPPLHPNDEDRGR).

Belongs to the class-I aminoacyl-tRNA synthetase family. Glutamate--tRNA ligase type 2 subfamily.

The protein localises to the cytoplasm. It catalyses the reaction tRNA(Glu) + L-glutamate + ATP = L-glutamyl-tRNA(Glu) + AMP + diphosphate. In terms of biological role, catalyzes the attachment of glutamate to tRNA(Glu) in a two-step reaction: glutamate is first activated by ATP to form Glu-AMP and then transferred to the acceptor end of tRNA(Glu). This Natronomonas pharaonis (strain ATCC 35678 / DSM 2160 / CIP 103997 / JCM 8858 / NBRC 14720 / NCIMB 2260 / Gabara) (Halobacterium pharaonis) protein is Glutamate--tRNA ligase.